A 388-amino-acid polypeptide reads, in one-letter code: Methylthioribose-1-phosphate isomerase (388 aa).

Aspartate 252 serves as the catalytic Proton donor.

It belongs to the eIF-2B alpha/beta/delta subunits family. MtnA subfamily.

Its subcellular location is the cytoplasm. The protein resides in the nucleus. It catalyses the reaction 5-(methylsulfanyl)-alpha-D-ribose 1-phosphate = 5-(methylsulfanyl)-D-ribulose 1-phosphate. Its pathway is amino-acid biosynthesis; L-methionine biosynthesis via salvage pathway; L-methionine from S-methyl-5-thio-alpha-D-ribose 1-phosphate: step 1/6. Its function is as follows. Catalyzes the interconversion of methylthioribose-1-phosphate (MTR-1-P) into methylthioribulose-1-phosphate (MTRu-1-P). The sequence is that of Methylthioribose-1-phosphate isomerase from Verticillium alfalfae (strain VaMs.102 / ATCC MYA-4576 / FGSC 10136) (Verticillium wilt of alfalfa).